Here is a 171-residue protein sequence, read N- to C-terminus: Actin-related protein 2/3 complex subunit 4 (171 aa).

The protein belongs to the ARPC4 family. As to quaternary structure, component of the Arp2/3 complex composed of ARP2, ARP3, ARC40/p41-ARC, ARC35/p34-ARC, ARC18/p21-ARC, ARC19/p20-ARC and ARC16/p16-ARC.

It is found in the cytoplasm. The protein resides in the cytoskeleton. It localises to the actin patch. Functionally, functions as actin-binding component of the Arp2/3 complex which is involved in regulation of actin polymerization and together with an activating nucleation-promoting factor (NPF) mediates the formation of branched actin networks. Seems to contact the mother actin filament. In Saccharomyces cerevisiae (strain ATCC 204508 / S288c) (Baker's yeast), this protein is Actin-related protein 2/3 complex subunit 4 (ARC19).